Consider the following 5634-residue polypeptide: Hemicentin-1 (5634 aa).

The first 21 residues, 1 to 21 (MIAQEVVHTVFLVALFRSSLA), serve as a signal peptide directing secretion. Residues 41-216 (TLAFVFDVTG…EVLKWVEEAV (176 aa)) enclose the VWFA domain. Ig-like C2-type domains follow at residues 431–517 (PKVT…FDVS), 520–607 (PPII…VFLT), 612–697 (PKVT…STLR), 702–788 (PKLV…LTLD), 793–883 (PVFI…TTVT), 890–976 (PLIG…TSVA), 981–1067 (PSIQ…VQLT), 1072–1166 (PRVF…VKLS), 1171–1254 (PKIQ…AEVT), 1261–1353 (PSVE…YNLK), 1357–1446 (PPVI…FSVN), 1451–1540 (PSIL…IKLT), 1545–1633 (PSIK…FHVD), 1638–1723 (PTIE…REIK), 1732–1820 (PAVE…FEVT), 1825–1913 (PTIK…TQLH), 1918–2006 (PSLD…YSLQ), 2011–2096 (PSIS…RDID), 2103–2189 (PNIM…YNVN), 2194–2284 (PSIY…YNLQ), 2289–2378 (PSIT…YDLS), 2383–2472 (PSII…FGLS), 2477–2565 (PHIV…FRLN), 2570–2661 (PTIA…YEVK), 2665–2762 (PPII…VNIQ), 2765–2863 (PSFQ…YDVH), 2867–2958 (PPVI…FNLN), 2962–3050 (PPSV…VSLT), and 3055–3145 (PSIK…FHLN). 2 disulfides stabilise this stretch: Cys-451–Cys-499 and Cys-541–Cys-591. Residue Thr-615 is glycosylated (O-linked (GalNAc...) threonine). 11 cysteine pairs are disulfide-bonded: Cys-633–Cys-681, Cys-723–Cys-772, Cys-814–Cys-867, Cys-911–Cys-960, Cys-1002–Cys-1051, Cys-1101–Cys-1150, Cys-1192–Cys-1240, Cys-1287–Cys-1337, Cys-1381–Cys-1430, Cys-1474–Cys-1524, and Cys-1568–Cys-1617. 2 O-linked (GalNAc...) threonine glycosylation sites follow: Thr-1292 and Thr-1386. Thr-1639 carries O-linked (GalNAc...) threonine glycosylation. Disulfide bonds link Cys-1662/Cys-1711 and Cys-1755/Cys-1804. A glycan (O-linked (GalNAc...) threonine) is linked at Thr-1826. 14 disulfide bridges follow: Cys-1847/Cys-1897, Cys-1941/Cys-1990, Cys-2032/Cys-2082, Cys-2124/Cys-2173, Cys-2217/Cys-2268, Cys-2313/Cys-2362, Cys-2407/Cys-2456, Cys-2500/Cys-2549, Cys-2596/Cys-2645, Cys-2695/Cys-2744, Cys-2798/Cys-2847, Cys-2893/Cys-2942, Cys-2985/Cys-3034, and Cys-3080/Cys-3129. Residue Thr-3151 is glycosylated (O-linked (GalNAc...) threonine). Ig-like C2-type domains are found at residues 3155–3227 (PETE…VASN), 3244–3334 (PSVA…FNLN), 3339–3428 (PKIR…YSLQ), 3433–3515 (PNMD…GEVS), 3526–3614 (PHIN…YLVR), 3619–3707 (PNIA…FNLT), 3712–3798 (PSIG…IDLQ), 3803–3891 (PSIA…VDLT), 3896–3982 (PTIA…VTLR), 3987–4073 (PVIQ…VKLN), 4077–4163 (PPVI…STLT), 4168–4252 (PRIQ…RIVT), 4259–4332 (PTFT…AENS), 4347–4434 (PPVF…MSLT), and 4439–4526 (PIIT…VIVQ). 8 disulfides stabilise this stretch: Cys-3172-Cys-3223, Cys-3267-Cys-3318, Cys-3363-Cys-3412, Cys-3456-Cys-3505, Cys-3549-Cys-3598, Cys-3642-Cys-3691, Cys-3733-Cys-3782, and Cys-3824-Cys-3875. Thr-3897 is a glycosylation site (O-linked (GalNAc...) threonine). Cystine bridges form between Cys-3917-Cys-3966, Cys-4008-Cys-4057, Cys-4099-Cys-4147, Cys-4189-Cys-4238, Cys-4280-Cys-4327, Cys-4370-Cys-4418, Cys-4460-Cys-4508, Cys-4540-Cys-4577, Cys-4544-Cys-4582, Cys-4555-Cys-4567, Cys-4597-Cys-4634, Cys-4601-Cys-4639, Cys-4612-Cys-4624, Cys-4654-Cys-4691, Cys-4658-Cys-4696, Cys-4669-Cys-4681, Cys-4711-Cys-4748, Cys-4715-Cys-4753, Cys-4726-Cys-4738, Cys-4768-Cys-4805, Cys-4772-Cys-4810, Cys-4783-Cys-4795, Cys-4825-Cys-4862, Cys-4829-Cys-4867, and Cys-4840-Cys-4852. O-linked (GalNAc...) threonine glycosylation occurs at Thr-4379. 6 TSP type-1 domains span residues 4528–4583 (HGGF…KLCP), 4585–4640 (DGHW…RPCP), 4642–4697 (HGVW…RHCP), 4699–4754 (DGRW…DPCP), 4756–4811 (HGNW…DMCP), and 4813–4868 (DGSW…QACP). The region spanning 4870–5092 (GPQRARGSVI…SKGDRSNQCP (223 aa)) is the Nidogen G2 beta-barrel domain. Residues 5106-5145 (DEDECTAGNPCSHTCHNAIGAYYCSCPKGLTIAADGRTCQ) form the EGF-like 1; calcium-binding domain. Intrachain disulfides connect Cys-5110/Cys-5120, Cys-5116/Cys-5129, and Cys-5131/Cys-5144. Positions 5146–5189 (DIDECALGGHTCRAGQDCDNTIGSYRCVVHCGTGFRRTSDGLSC) constitute an EGF-like 2; calcium-binding domain. In terms of domain architecture, EGF-like 3; calcium-binding spans 5191–5228 (DINECQESSPCHQRCFNVIGSFHCGCEAGYQLKGRKCI). 3 disulfide bridges follow: Cys-5195–Cys-5205, Cys-5201–Cys-5214, and Cys-5216–Cys-5227. Residues 5229–5269 (DVNECRQNVCRPDQHCKNTRGGYKCIDLCPSGMTKAENGTC) enclose the EGF-like 4; calcium-binding domain. Residues 5271–5306 (DIDECKDGTHQCRYNQICENTRGSYRCACPRGYRSQ) form the EGF-like 5; calcium-binding domain. Intrachain disulfides connect Cys-5275–Cys-5288, Cys-5282–Cys-5297, Cys-5318–Cys-5329, Cys-5325–Cys-5338, Cys-5340–Cys-5353, Cys-5435–Cys-5445, Cys-5441–Cys-5454, and Cys-5456–Cys-5469. Positions 5314–5354 (DINECEQVPKPCAHQCSNSPGSFKCICLPGQQLLGDGKSCA) constitute an EGF-like 6; calcium-binding domain. In terms of domain architecture, EGF-like 7; calcium-binding spans 5431-5470 (DIDECQNRDTCQHECKNTIGSYQCVCPPGYRLMLNGKTCQ).

In terms of tissue distribution, in the kidney, expressed in the glomerulus (at protein level). Expressed in whisker and hair follicles, eye, tongue, and splenic and lymph node conduits (at protein level). In the embryo, localizes to the cleavage furrow at the two-cell stage (at protein level). In neonatal skin, expressed throughout the dermis (at protein level). In adult skin, strongly concentrated at the dermal side of the basement membrane but not detectable in the deeper dermis. Shows tendon-specific localization at the myotendinous junction and is also detected in the perichondrium (at protein level). Expressed by chondrocytes residing in articular cartilage and the femoral growth plate of 52 week old mice (at protein level). Expressed in vascular endothelial cells in coronary arteries and sparsely in endocardial endothelium (at protein level). Expressed in skin, tongue, lung and eye. At 14.5 dpc, expressed in the vibrissae, dermis, forelimb, kidney, intestine, lung and iliac cartilage where expression is found mainly in mesenchymal cells.

The protein localises to the secreted. Its subcellular location is the extracellular space. It is found in the extracellular matrix. The protein resides in the basement membrane. It localises to the cytoplasm. The protein localises to the cell junction. Its subcellular location is the cleavage furrow. Involved in transforming growth factor beta-mediated rearrangement of the podocyte cytoskeleton which includes reduction of F-actin fibers and broadening, flattening and elongation of podocytes. Plays a role in basement membrane organization. May promote cleavage furrow maturation during cytokinesis in preimplantation embryos. May play a role in the architecture of adhesive and flexible epithelial cell junctions. May play a role during myocardial remodeling by imparting an effect on cardiac fibroblast migration. The chain is Hemicentin-1 from Mus musculus (Mouse).